The primary structure comprises 33 residues: uncharacterized protein (33 aa).

The segment at 1-24 is disordered; the sequence is MRTGTRCDLGELSHPRKTLPPRGM.

This is an uncharacterized protein from Treponema pallidum (strain Nichols).